Here is a 381-residue protein sequence, read N- to C-terminus: Na(+)/H(+) antiporter NhaA 1 (381 aa).

The next 11 helical transmembrane spans lie at 18 to 38 (GLLLLFVTVISLWAANSSYSA), 53 to 73 (ITHWINDGLMTIFFLLIGLEL), 89 to 109 (SLPIMAAFGGMLIPAATFLAL), 118 to 138 (GAGIPMATDIAFAIGILSLLG), 147 to 167 (VFLTALAVIDDLGAIIVIAVF), 170 to 190 (TSIGFVNLAIALGIWVFLFVL), 210 to 230 (YFMLNSGIHATITGVILAFVI), 251 to 271 (PVAFFILPLFAIANTCIAIES), 283 to 303 (FGIILGLVIGKPLGILLFSSI), 321 to 341 (ILGAGMLGGIGFTMSIFITLL), and 348 to 368 (IIVFSKIAIIIASIISGITGF).

It belongs to the NhaA Na(+)/H(+) (TC 2.A.33) antiporter family.

Its subcellular location is the cell inner membrane. The enzyme catalyses Na(+)(in) + 2 H(+)(out) = Na(+)(out) + 2 H(+)(in). In terms of biological role, na(+)/H(+) antiporter that extrudes sodium in exchange for external protons. The protein is Na(+)/H(+) antiporter NhaA 1 of Flavobacterium johnsoniae (strain ATCC 17061 / DSM 2064 / JCM 8514 / BCRC 14874 / CCUG 350202 / NBRC 14942 / NCIMB 11054 / UW101) (Cytophaga johnsonae).